Consider the following 80-residue polypeptide: Large ribosomal subunit protein eL20 (80 aa).

Belongs to the eukaryotic ribosomal protein eL20 family. In terms of assembly, part of the 50S ribosomal subunit. Binds 23S rRNA.

The chain is Large ribosomal subunit protein eL20 from Methanopyrus kandleri (strain AV19 / DSM 6324 / JCM 9639 / NBRC 100938).